A 451-amino-acid chain; its full sequence is Tubulin beta-4 chain (451 aa).

Residues Q11, E69, S138, G142, T143, G144, N204, and N226 each contribute to the GTP site. Residue E69 participates in Mg(2+) binding. Residues 417–427 are compositionally biased toward polar residues; sequence DLVSEYQQYQD. Positions 417–451 are disordered; that stretch reads DLVSEYQQYQDATAEEEGEYDEDDGGYGDEDDGMM. Residues 429–451 are compositionally biased toward acidic residues; that stretch reads TAEEEGEYDEDDGGYGDEDDGMM.

This sequence belongs to the tubulin family. Dimer of alpha and beta chains. A typical microtubule is a hollow water-filled tube with an outer diameter of 25 nm and an inner diameter of 15 nM. Alpha-beta heterodimers associate head-to-tail to form protofilaments running lengthwise along the microtubule wall with the beta-tubulin subunit facing the microtubule plus end conferring a structural polarity. Microtubules usually have 13 protofilaments but different protofilament numbers can be found in some organisms and specialized cells. Requires Mg(2+) as cofactor.

It localises to the cytoplasm. Its subcellular location is the cytoskeleton. In terms of biological role, tubulin is the major constituent of microtubules, a cylinder consisting of laterally associated linear protofilaments composed of alpha- and beta-tubulin heterodimers. Microtubules grow by the addition of GTP-tubulin dimers to the microtubule end, where a stabilizing cap forms. Below the cap, tubulin dimers are in GDP-bound state, owing to GTPase activity of alpha-tubulin. The chain is Tubulin beta-4 chain (TUBB4) from Oomycete-like sp. (strain MacKay2000).